Reading from the N-terminus, the 293-residue chain is Deubiquitinase OTUD6B (293 aa).

N-acetylmethionine is present on Met-1. One can recognise an OTU domain in the interval 147-284; it reads LEIKQIPSDG…GEHYNSVTRL (138 aa). Residues 152 to 158 are cys-loop; sequence IPSDGHC. Asp-155 is an active-site residue. Cys-158 functions as the Nucleophile in the catalytic mechanism. Positions 219 to 229 are variable-loop; it reads IVNTAAWGGQL. Positions 267 to 277 are his-loop; it reads YMRHAYGLGEH. Residue His-277 is part of the active site.

Interacts with the eukaryotic translation initiation factor 4F complex.

The enzyme catalyses Thiol-dependent hydrolysis of ester, thioester, amide, peptide and isopeptide bonds formed by the C-terminal Gly of ubiquitin (a 76-residue protein attached to proteins as an intracellular targeting signal).. Its function is as follows. Deubiquitinating enzyme that may play a role in the ubiquitin-dependent regulation of protein synthesis, downstream of mTORC1. May associate with the protein synthesis initiation complex and modify its ubiquitination to repress translation. May also repress DNA synthesis and modify different cellular targets thereby regulating cell growth and proliferation. May also play a role in proteasome assembly and function. Stimulates protein synthesis. Influences the expression of CCND1/cyclin D1 by promoting its translation and regulates MYC/c-Myc protein stability. The protein is Deubiquitinase OTUD6B of Homo sapiens (Human).